The chain runs to 478 residues: NADH-quinone oxidoreductase subunit N (478 aa).

13 helical membrane passes run 8–28 (LVLP…FGVW), 38–58 (ILWA…LGTG), 62–82 (AFGG…VILV), 106–126 (PILI…GDLM), 160–180 (FVLG…VYGF), 200–220 (IGLL…VSAV), 234–254 (PTPV…ALIA), 268–288 (WGQI…IAGI), 300–320 (SSIS…AAGV), 322–342 (SMLL…AFIL), 368–388 (AFAL…LGFF), 398–418 (IGAG…IGAF), and 445–465 (FAFL…MAGV).

This sequence belongs to the complex I subunit 2 family. In terms of assembly, NDH-1 is composed of 14 different subunits. Subunits NuoA, H, J, K, L, M, N constitute the membrane sector of the complex.

The protein localises to the cellular chromatophore membrane. The catalysed reaction is a quinone + NADH + 5 H(+)(in) = a quinol + NAD(+) + 4 H(+)(out). Functionally, NDH-1 shuttles electrons from NADH, via FMN and iron-sulfur (Fe-S) centers, to quinones in the respiratory chain. The immediate electron acceptor for the enzyme in this species is believed to be ubiquinone. Couples the redox reaction to proton translocation (for every two electrons transferred, four hydrogen ions are translocated across the cytoplasmic membrane), and thus conserves the redox energy in a proton gradient. This Rhodobacter capsulatus (Rhodopseudomonas capsulata) protein is NADH-quinone oxidoreductase subunit N.